The following is a 297-amino-acid chain: Acetyl-coenzyme A carboxylase carboxyl transferase subunit beta (297 aa).

Residues 27-296 (LWHKCPSCEA…PEQAREAAAV (270 aa)) enclose the CoA carboxyltransferase N-terminal domain. Residues C31, C34, C50, and C53 each coordinate Zn(2+). A C4-type zinc finger spans residues 31–53 (CPSCEAVLYRPELEKTLDVCPKC).

It belongs to the AccD/PCCB family. Acetyl-CoA carboxylase is a heterohexamer composed of biotin carboxyl carrier protein (AccB), biotin carboxylase (AccC) and two subunits each of ACCase subunit alpha (AccA) and ACCase subunit beta (AccD). Requires Zn(2+) as cofactor.

The protein localises to the cytoplasm. It catalyses the reaction N(6)-carboxybiotinyl-L-lysyl-[protein] + acetyl-CoA = N(6)-biotinyl-L-lysyl-[protein] + malonyl-CoA. It functions in the pathway lipid metabolism; malonyl-CoA biosynthesis; malonyl-CoA from acetyl-CoA: step 1/1. Functionally, component of the acetyl coenzyme A carboxylase (ACC) complex. Biotin carboxylase (BC) catalyzes the carboxylation of biotin on its carrier protein (BCCP) and then the CO(2) group is transferred by the transcarboxylase to acetyl-CoA to form malonyl-CoA. The protein is Acetyl-coenzyme A carboxylase carboxyl transferase subunit beta of Pseudomonas putida (strain GB-1).